A 375-amino-acid chain; its full sequence is D-apiose dehydrogenase (375 aa).

F29–F30 provides a ligand contact to NAD(+). Residues W38, R39, I41, and A44 each contribute to the Mg(2+) site. NAD(+)-binding positions include D51, S93, Q111–K112, N140, and Q179–Y181. Residue K112 coordinates substrate. Positions 179, 192, 196, and 246 each coordinate substrate.

This sequence belongs to the Gfo/Idh/MocA family.

The enzyme catalyses D-apiofuranose + NAD(+) = D-apionolactone + NADH + H(+). The protein operates within carbohydrate metabolism. Functionally, involved in catabolism of D-apiose. Catalyzes oxidation of D-apiose to D-apionolactone. The polypeptide is D-apiose dehydrogenase (Paraburkholderia graminis (strain ATCC 700544 / DSM 17151 / LMG 18924 / NCIMB 13744 / C4D1M)).